Reading from the N-terminus, the 393-residue chain is Zinc-regulated GTPase metalloprotein activator 1 (393 aa).

A psi-PxLVp motif motif is present at residues 16 to 23 (EDCPELVP). Residue 47–54 (GYLGAGKT) coordinates GTP. Zn(2+)-binding residues include Cys105, Cys107, and Cys108. The CXCC motif motif lies at 105-108 (CLCC). GTP is bound by residues 108–112 (CSVKD) and 201–204 (NKTD). Residues 271 to 374 (IVTVTFEVPG…VLQQLFLTAV (104 aa)) enclose the CobW C-terminal domain.

The protein belongs to the SIMIBI class G3E GTPase family. ZNG1 subfamily. Present at high level in the nuclei of the ureteric bud cells in the developing kidneys.

The protein localises to the nucleus. It carries out the reaction GTP + H2O = GDP + phosphate + H(+). In terms of biological role, zinc chaperone that directly transfers zinc cofactor to target metalloproteins, thereby activating them. Catalyzes zinc insertion into the active site of methionine aminopeptidase METAP1, which function to cleave the initiator methionine from polypeptides during or after protein translation. Mechanistically, the N-terminal psi-PxLVp motif binds to the C6H2-type zinc finger of inactive form of METAP1. After formation of the docked complex, zinc is transferred from the CXCC motif in the GTPase domain of ZNG1 to the zinc binding site in the peptidase domain of METAP1 in a process requiring GTP hydrolysis. GTP/GDP exchange is required for release of active METAP1. In Mus musculus (Mouse), this protein is Zinc-regulated GTPase metalloprotein activator 1 (Zng1).